The following is a 745-amino-acid chain: Jacalin-related lectin 4 (745 aa).

Jacalin-type lectin domains lie at 2–148, 151–294, 307–448, 451–594, and 601–744; these read AQKL…YFAP, PTKF…YFSP, AEKL…YFVT, PTKF…YFSR, and AETL…YVMP.

Belongs to the jacalin lectin family.

The chain is Jacalin-related lectin 4 (JAL4) from Arabidopsis thaliana (Mouse-ear cress).